The sequence spans 304 residues: Glucose-6-phosphate isomerase (304 aa).

E146 serves as the catalytic Proton donor. Residue H177 is part of the active site.

Belongs to the GPI family.

It localises to the cytoplasm. It catalyses the reaction alpha-D-glucose 6-phosphate = beta-D-fructose 6-phosphate. It functions in the pathway carbohydrate degradation; glycolysis; D-glyceraldehyde 3-phosphate and glycerone phosphate from D-glucose: step 2/4. In Calanus finmarchicus (Calanus tonsus), this protein is Glucose-6-phosphate isomerase (PGI).